Reading from the N-terminus, the 356-residue chain is NADH-quinone oxidoreductase subunit H (356 aa).

8 consecutive transmembrane segments (helical) span residues 4-24 (ALIL…LTGV), 79-99 (LLAP…IPFG), 127-147 (GVLY…IAGW), 166-186 (ISYE…TGSL), 198-218 (MWNI…TAMF), 251-271 (FFLA…LLFF), 289-309 (FIGL…FIWV), and 329-349 (MIPW…YWKE).

This sequence belongs to the complex I subunit 1 family. In terms of assembly, NDH-1 is composed of 14 different subunits. Subunits NuoA, H, J, K, L, M, N constitute the membrane sector of the complex.

The protein localises to the cell inner membrane. The enzyme catalyses a quinone + NADH + 5 H(+)(in) = a quinol + NAD(+) + 4 H(+)(out). In terms of biological role, NDH-1 shuttles electrons from NADH, via FMN and iron-sulfur (Fe-S) centers, to quinones in the respiratory chain. The immediate electron acceptor for the enzyme in this species is believed to be ubiquinone. Couples the redox reaction to proton translocation (for every two electrons transferred, four hydrogen ions are translocated across the cytoplasmic membrane), and thus conserves the redox energy in a proton gradient. This subunit may bind ubiquinone. This chain is NADH-quinone oxidoreductase subunit H, found in Leptospira biflexa serovar Patoc (strain Patoc 1 / ATCC 23582 / Paris).